The primary structure comprises 497 residues: MAILVRLFFALFVVSVYFFRVRLRLSHIPGPFLASLTNINRRQWVTTGRAHTIHTELHRQYGKVVRAGPNTVFVSDPAAIPAIYRFNEPYQKSEFYDALMPYVRGKSIPDVFATRDEHIHRTMKQPIAAIYSMSNLVSFEPYVKSTIEYFFSRLDSLFVETGKVCNFGLWLHLFASDVMGEITFSRRLGFLETGGDMENVMANNWKFFVQAAPATQMPWLDYFWKRNPLLPGSVKPNKVIEFGVARIQERLHLSEKHPDHVNSRDFLSRFIAAKEKNSQIGPDAIMTWANSNIQAGSDTTAILLSALFYHLLKNPTSLAALCTEIDAAAKRGCLSSILTWKETRDLPYLDACVKEAARLHPPISLPLERVIPESGTVIGGFKIPGGTRVAMNPWAVHRDRDVFGADADTWRPERWLEGEEKAKTLYNSLLTFGGGHRSCLGKNISYLEIYKLVPSILLRYEIGLAEPEKEWHLENRWFVMPSRFYVRLKARNGVTKL.

The helical transmembrane segment at 2 to 19 (AILVRLFFALFVVSVYFF) threads the bilayer. Heme is bound at residue cysteine 439. N-linked (GlcNAc...) asparagine glycosylation occurs at asparagine 443.

This sequence belongs to the cytochrome P450 family. It depends on heme as a cofactor.

The protein localises to the membrane. It participates in phytotoxin biosynthesis. Cytochrome P450 monooxygenase; part of the gene cluster that mediates the biosynthesis of cichorine, a phytotoxin active against knapweed, corn, and soybeans. The first step in the pathway is performed by the non-reducing polyketide synthase pkbA that condenses one acetyl-CoA starter unit with 3 malonyl-CoA units. PkbA also catalyzes one methylation step to produce 3-methylorsellinate. The nonribosomal peptide synthase-like protein cicB, the cytochrome P450 monooxygenase cicH and the O-methyltransferase cicE are involved in the conversion of 3-methylorsellinate into nidulol. CicB converts 3-methylorsellinate to a yet unidentified intermediate, cicH may play a ring-closing role for cichorine and cicE is plausibly responsible for the methylation of one of the phenol groups. The oxidoreductase cicC acts downstream with still unidentified enzymes to further convert nidulol into cichorine. The chain is Cytochrome P450 monooxygenase cicH from Emericella nidulans (strain FGSC A4 / ATCC 38163 / CBS 112.46 / NRRL 194 / M139) (Aspergillus nidulans).